A 317-amino-acid polypeptide reads, in one-letter code: Fruit protein pKIWI502 (317 aa).

The disordered stretch occupies residues 1 to 29; sequence MSITLSRPSLSRPSLSRHPSLTLHSSLSH. The FAD-binding FR-type domain maps to 71-182; it reads YIWTPVPISR…TQIIGRGFDI (112 aa).

The protein is Fruit protein pKIWI502 of Actinidia deliciosa (Kiwi).